Here is a 128-residue protein sequence, read N- to C-terminus: MAVKKSRKRRVKKNIESGVAHIHSTFNNTLVMITDVHGNAVAWSSAGSLGFKGSRKSTPFAAQMASEAAAKGAMEHGMKTVEVAVKGPGSGREAAIRALQTTGLEVTSIKDVTPVPHNGCRPPKRRRV.

It belongs to the universal ribosomal protein uS11 family. Part of the 30S ribosomal subunit. Interacts with proteins S7 and S18. Binds to IF-3.

In terms of biological role, located on the platform of the 30S subunit, it bridges several disparate RNA helices of the 16S rRNA. Forms part of the Shine-Dalgarno cleft in the 70S ribosome. This is Small ribosomal subunit protein uS11 from Ligilactobacillus salivarius (strain UCC118) (Lactobacillus salivarius).